The chain runs to 443 residues: Trigger factor (443 aa).

Positions 165 to 250 (GDQIVMDFLG…VKEVKKPVPA (86 aa)) constitute a PPIase FKBP-type domain.

The protein belongs to the FKBP-type PPIase family. Tig subfamily.

The protein resides in the cytoplasm. The catalysed reaction is [protein]-peptidylproline (omega=180) = [protein]-peptidylproline (omega=0). In terms of biological role, involved in protein export. Acts as a chaperone by maintaining the newly synthesized protein in an open conformation. Functions as a peptidyl-prolyl cis-trans isomerase. The polypeptide is Trigger factor (Roseobacter denitrificans (strain ATCC 33942 / OCh 114) (Erythrobacter sp. (strain OCh 114))).